The primary structure comprises 1125 residues: ATP-dependent DNA helicase Hel308 (1125 aa).

The short motif at 1–29 (MKVDELPIDERIKRVIKERGIEELYPPQA) is the Q motif element. Residues Gln-28 and 46–53 (IPTASGKT) each bind ATP. Positions 33–197 (KSGVLEGKNL…WLDASLVVSD (165 aa)) constitute a Helicase ATP-binding domain. The short motif at 145-148 (DEVH) is the DEAH box element. Residues 226-440 (NWESLVLDAV…ELKERLESET (215 aa)) form the Helicase C-terminal domain. In terms of domain architecture, DOD-type homing endonuclease spans 500 to 640 (LIGLWIAEGS…LQLLVASLGY (141 aa)).

Belongs to the helicase family. Hel308 subfamily. Monomer. This protein undergoes a protein self splicing that involves a post-translational excision of the intervening region (intein) followed by peptide ligation.

The enzyme catalyses Couples ATP hydrolysis with the unwinding of duplex DNA by translocating in the 3'-5' direction.. The catalysed reaction is ATP + H2O = ADP + phosphate + H(+). Its function is as follows. DNA-dependent ATPase and 3'-5' DNA helicase that may be involved in repair of stalled replication forks. The protein is ATP-dependent DNA helicase Hel308 of Thermococcus kodakarensis (strain ATCC BAA-918 / JCM 12380 / KOD1) (Pyrococcus kodakaraensis (strain KOD1)).